The following is a 160-amino-acid chain: Large ribosomal subunit protein uL22c (160 aa).

This sequence belongs to the universal ribosomal protein uL22 family. In terms of assembly, part of the 50S ribosomal subunit.

The protein resides in the plastid. It localises to the chloroplast. This protein binds specifically to 23S rRNA. In terms of biological role, the globular domain of the protein is located near the polypeptide exit tunnel on the outside of the subunit, while an extended beta-hairpin is found that lines the wall of the exit tunnel in the center of the 70S ribosome. This Nasturtium officinale (Watercress) protein is Large ribosomal subunit protein uL22c (rpl22).